A 255-amino-acid chain; its full sequence is MSKEFLPTILKQKEQEVAAMSYEELQPLRSTYSLYEYLKNHPQELQLIAEVKKASPSLGDINLGVDIVEQARTYERCGAAMISVLTDEIFFKGHLDYLREISSQVTIPTLNKDFIIDEKQIVRARNAGATVILLIVAALSEKRLQELYDFATGLGLEVLVETHNLAELETAHRIGAQIIGVNNRNLVTFETDINTSLQLSAHFKDDRVYVSESAIFSKEDAELVAPYFHAVLVGTALMQAENVAEKIKELKIDKG.

This sequence belongs to the TrpC family.

The enzyme catalyses 1-(2-carboxyphenylamino)-1-deoxy-D-ribulose 5-phosphate + H(+) = (1S,2R)-1-C-(indol-3-yl)glycerol 3-phosphate + CO2 + H2O. Its pathway is amino-acid biosynthesis; L-tryptophan biosynthesis; L-tryptophan from chorismate: step 4/5. This is Indole-3-glycerol phosphate synthase from Streptococcus sanguinis (strain SK36).